The following is a 585-amino-acid chain: Aspartate--tRNA(Asp/Asn) ligase (585 aa).

Residue glutamate 173 participates in L-aspartate binding. Residues 197 to 200 are aspartate; it reads QLFK. Residue arginine 219 participates in L-aspartate binding. Residues 219–221 and glutamine 228 each bind ATP; that span reads RDE. Histidine 447 contacts L-aspartate. Glutamate 477 is a binding site for ATP. Arginine 484 is an L-aspartate binding site. ATP is bound at residue 529–532; sequence GFDR.

The protein belongs to the class-II aminoacyl-tRNA synthetase family. Type 1 subfamily. In terms of assembly, homodimer.

It is found in the cytoplasm. The catalysed reaction is tRNA(Asx) + L-aspartate + ATP = L-aspartyl-tRNA(Asx) + AMP + diphosphate. Functionally, aspartyl-tRNA synthetase with relaxed tRNA specificity since it is able to aspartylate not only its cognate tRNA(Asp) but also tRNA(Asn). Reaction proceeds in two steps: L-aspartate is first activated by ATP to form Asp-AMP and then transferred to the acceptor end of tRNA(Asp/Asn). The protein is Aspartate--tRNA(Asp/Asn) ligase of Campylobacter concisus (strain 13826).